The primary structure comprises 64 residues: Endodeoxyribonuclease toxin RalR (64 aa).

The cofactor is Ca(2+). Mg(2+) is required as a cofactor.

Its activity is regulated as follows. Inhibited by EDTA. Toxic component of a type I toxin-antitoxin (TA) system. Upon overexpression inhibits growth and reduces colony-forming units in both the presence and absence of the Rac prophage, cells become filamentous. Has deoxyribonuclease activity (probably endonucleolytic), does not digest RNA. Its toxic effects are neutralized by sRNA antitoxin RalA, which is encoded in trans on the opposite DNA strand. Has RAL-like activity. This is Endodeoxyribonuclease toxin RalR (ralR) from Escherichia coli (strain K12).